Consider the following 549-residue polypeptide: Glucose-6-phosphate isomerase (549 aa).

Glu355 (proton donor) is an active-site residue. Residues His386 and Lys514 contribute to the active site.

It belongs to the GPI family.

It localises to the cytoplasm. It catalyses the reaction alpha-D-glucose 6-phosphate = beta-D-fructose 6-phosphate. The protein operates within carbohydrate biosynthesis; gluconeogenesis. It participates in carbohydrate degradation; glycolysis; D-glyceraldehyde 3-phosphate and glycerone phosphate from D-glucose: step 2/4. In terms of biological role, catalyzes the reversible isomerization of glucose-6-phosphate to fructose-6-phosphate. This Klebsiella pneumoniae (strain 342) protein is Glucose-6-phosphate isomerase.